Reading from the N-terminus, the 570-residue chain is MTKSRDQTHQEGCCGSLANYLTSAKFLLYLGHSLSTWGDRMWHFAVSVFLVELYGNSLLLTAVYGLVVAGSVLVLGAIIGDWVDKNARLKVAQTSLVVQNVSVILCGIILMMVFLHKNELLNMYHGWVLTVCYILIITIANIANLASTATAITIQRDWIVVVAGENRSRLADMNATIRRIDQLTNILAPMAVGQIMTFGSPVIGCGFISGWNLVSMCVEYFLLWKVYQKTPALAVKAALKVEESELKQLTSPKDTEPKPLEGTHLMGEKDSNIRELECEQEPTCASQIAEPFRTFRDGWVSYYNQPVFLAGMGLAFLYMTVLGFDCITTGYAYTQGLSGSILSVLMGASAITGIMGTVAFTWLRRKCGLVRTGLFSGLAQLSCLILCVISVFMPGSPLDLSVSPFEDIRSRFIHEEAVSSTTKIPETEMLMSNVSNVVNTVHEMSTKSVPIISVSLLFAGVIAARIGLWSFDLTVTQLLQENVIESERGIINGVQNSMNYLLDLLHFIMVILAPNPEAFGLLVLISVSFVAMGHLMYFRFAQKTLGNQIFVCAPDEKEVTDESQPNTSVV.

The Cytoplasmic segment spans residues 1–23 (MTKSRDQTHQEGCCGSLANYLTS). Residues 24 to 53 (AKFLLYLGHSLSTWGDRMWHFAVSVFLVEL) form a helical membrane-spanning segment. Fe cation is bound by residues Asp-39 and His-43. Residues 54–57 (YGNS) are Extracellular-facing. Residues 58 to 84 (LLLTAVYGLVVAGSVLVLGAIIGDWVD) traverse the membrane as a helical segment. The Cytoplasmic segment spans residues 85-87 (KNA). Residues 88–118 (RLKVAQTSLVVQNVSVILCGIILMMVFLHKN) form a helical membrane-spanning segment. Residues 119–126 (ELLNMYHG) are Extracellular-facing. A helical transmembrane segment spans residues 127–162 (WVLTVCYILIITIANIANLASTATAITIQRDWIVVV). At 163-164 (AG) the chain is on the cytoplasmic side. The helical transmembrane segment at 165–195 (ENRSRLADMNATIRRIDQLTNILAPMAVGQI) threads the bilayer. Over 196 to 202 (MTFGSPV) the chain is Extracellular. The helical transmembrane segment at 203–229 (IGCGFISGWNLVSMCVEYFLLWKVYQK) threads the bilayer. At 230-306 (TPALAVKAAL…DGWVSYYNQP (77 aa)) the chain is on the cytoplasmic side. Residues 307–333 (VFLAGMGLAFLYMTVLGFDCITTGYAY) traverse the membrane as a helical segment. Fe cation is bound at residue Cys-326. Over 334–338 (TQGLS) the chain is Extracellular. The helical transmembrane segment at 339–366 (GSILSVLMGASAITGIMGTVAFTWLRRK) threads the bilayer. Residues 367–368 (CG) lie on the Cytoplasmic side of the membrane. The helical transmembrane segment at 369-391 (LVRTGLFSGLAQLSCLILCVISV) threads the bilayer. Residues 392 to 452 (FMPGSPLDLS…EMSTKSVPII (61 aa)) lie on the Extracellular side of the membrane. A helical transmembrane segment spans residues 453 to 482 (SVSLLFAGVIAARIGLWSFDLTVTQLLQEN). Topologically, residues 483–487 (VIESE) are cytoplasmic. The chain crosses the membrane as a helical span at residues 488 to 512 (RGIINGVQNSMNYLLDLLHFIMVIL). His-506 is a Fe cation binding site. The Extracellular segment spans residues 513 to 515 (APN). A helical transmembrane segment spans residues 516–541 (PEAFGLLVLISVSFVAMGHLMYFRFA). Topologically, residues 542 to 570 (QKTLGNQIFVCAPDEKEVTDESQPNTSVV) are cytoplasmic.

The protein belongs to the ferroportin (FP) (TC 2.A.100) family. SLC40A subfamily. Identified in a complex with STOM. Interacts with HAMP; affinity of the peptide hormone HAMP for SLC40A1 increases by 80-fold in the presence of iron and the interaction promotes SLC40A1 ubiquitination and degradation. Part of a complex composed of SLC40A1/ferroportin, TF/transferrin and HEPH/hephaestin that transfers iron from cells to transferrin. Post-translationally, polyubiquitinated by RNF217; leading to proteasomal degradation. Under conditions of high systemic iron levels, both the hormone peptide hepcidin/HAMP and holo(iron bound)-transferrin/TF induce the ubiquitination, internalization and proteasomal degradation of SLC40A1 to control iron release from cells.

It is found in the cell membrane. Its subcellular location is the basolateral cell membrane. It carries out the reaction Fe(2+)(in) = Fe(2+)(out). Its activity is regulated as follows. During elevated serum iron levels, liver-derived hepcidin/HAMP negatively regulates cell surface SLC40A1 by inducing its ubiquitination, internalization, and degradation. Indeed, hepcidin/HAMP affinity towards ferroportin/SLC40A1 increases by 80-fold in the presence of iron. Transports Fe(2+) from the inside of a cell to the outside of the cell, playing a key role for maintaining systemic iron homeostasis. Transports iron from intestinal, splenic, hepatic cells, macrophages and erythrocytes into the blood to provide iron to other tissues. Controls therefore dietary iron uptake, iron recycling by macrophages and erythrocytes, and release of iron stores in hepatocytes. When iron is in excess in serum, circulating HAMP/hepcidin levels increase resulting in a degradation of SLC40A1, thus limiting the iron efflux to plasma. This Rattus norvegicus (Rat) protein is Ferroportin.